The following is a 160-amino-acid chain: Cytochrome b6-f complex subunit 4 (160 aa).

3 helical membrane passes run 36 to 56, 95 to 115, and 131 to 151; these read LLYIFPVVILGSIACCGGLAV, LLGVVLMAAVPAGLIAVPFIE, and AVFLFGTFVAIWLGIGATFPI.

It belongs to the cytochrome b family. PetD subfamily. As to quaternary structure, the 4 large subunits of the cytochrome b6-f complex are cytochrome b6, subunit IV (17 kDa polypeptide, petD), cytochrome f and the Rieske protein, while the 4 small subunits are petG, petL, petM and petN. The complex functions as a dimer.

It is found in the plastid. It localises to the cyanelle thylakoid membrane. Component of the cytochrome b6-f complex, which mediates electron transfer between photosystem II (PSII) and photosystem I (PSI), cyclic electron flow around PSI, and state transitions. The chain is Cytochrome b6-f complex subunit 4 from Cyanophora paradoxa.